Here is a 708-residue protein sequence, read N- to C-terminus: UvrABC system protein B (708 aa).

The Helicase ATP-binding domain occupies 32 to 419; it reads EGIQSGKTAQ…GGEVVEQIIR (388 aa). 45–52 provides a ligand contact to ATP; it reads GATGTGKT. Residues 98–121 carry the Beta-hairpin motif; that stretch reads YYDYYQPEAYIPQRDVYIEKDSSI. One can recognise a Helicase C-terminal domain in the interval 436–598; the sequence is QVTHLLEQVR…IVPKTVRKSI (163 aa). In terms of domain architecture, UVR spans 627 to 662; it reads IEYVDKLEQEMLAAAEDLEFERAARLRDRVLQLKEH. The interval 668–708 is disordered; the sequence is SEVEIVDEKSAGKSGGRGRGRRGAKKKGASKGTKIPRPKRG. Positions 683–708 are enriched in basic residues; sequence GRGRGRRGAKKKGASKGTKIPRPKRG.

Belongs to the UvrB family. As to quaternary structure, forms a heterotetramer with UvrA during the search for lesions. Interacts with UvrC in an incision complex.

Its subcellular location is the cytoplasm. In terms of biological role, the UvrABC repair system catalyzes the recognition and processing of DNA lesions. A damage recognition complex composed of 2 UvrA and 2 UvrB subunits scans DNA for abnormalities. Upon binding of the UvrA(2)B(2) complex to a putative damaged site, the DNA wraps around one UvrB monomer. DNA wrap is dependent on ATP binding by UvrB and probably causes local melting of the DNA helix, facilitating insertion of UvrB beta-hairpin between the DNA strands. Then UvrB probes one DNA strand for the presence of a lesion. If a lesion is found the UvrA subunits dissociate and the UvrB-DNA preincision complex is formed. This complex is subsequently bound by UvrC and the second UvrB is released. If no lesion is found, the DNA wraps around the other UvrB subunit that will check the other stand for damage. In Rhodopirellula baltica (strain DSM 10527 / NCIMB 13988 / SH1), this protein is UvrABC system protein B.